The primary structure comprises 502 residues: MIVNKKYFLLICIIILISINCLVLAKDEIENFLKEGDDLVSKGKYDLANENYSNAIDLIGSDTQHPQYVSLLFKRAGIYHQKGKNILALSDLNRAIEANPDNIHARLKRAKIQSSLGRFEEAMDEYKRVLKIRPDNSQAKQQIEKLKKVEQQLEKVRDMVKVEKNYKDSIAILLDIQSVVSDLKEVRLMLCECFFQQGDHRKVLDETMTILKSEPSSVAALYWRGKTFFSMGEKEIAMKFLKEGLKFDPDNTNCRAMIKTINKFEKSTANAQELFNQQKYQDALGQIEDALEIEPNSPTHSTPLYLLKCKCLLKVKKGKESIEACNRALELDELNADALYNRAEAYMYEEDYQKALNDYNKAREHKPNDPQIHDGIRRAQKAQQMAKRKDYYKILGIQKSATPEEIKKAFKKLAIKNHPDKSTETDKEKAQQIYMDINEAYEALKDEEKRKRYDMGEDINDPHGGQGGQGGGFGGFGGFHGFQGFQGFQQGGGGGGFQFHFR.

A signal peptide spans 1–25 (MIVNKKYFLLICIIILISINCLVLA). 8 TPR repeats span residues 29-62 (IENF…IGSD), 69-102 (VSLL…NPDN), 103-136 (IHAR…RPDN), 184-217 (KEVR…EPSS), 218-251 (VAAL…DPDN), 264-297 (FEKS…EPNS), 302-335 (TPLY…DELN), and 336-369 (ADAL…KPND). Asn-51 is a glycosylation site (N-linked (GlcNAc...) asparagine). Residues Cys-309 and Cys-325 are joined by a disulfide bond. Positions 390–457 (DYYKILGIQK…EKRKRYDMGE (68 aa)) constitute a J domain.

Its subcellular location is the secreted. The protein localises to the endoplasmic reticulum lumen. Its function is as follows. May be involved in the unfolded protein response (UPR) during ER stress. This chain is DnaJ homolog subfamily C member 3 homolog (dnajc3), found in Dictyostelium discoideum (Social amoeba).